Consider the following 200-residue polypeptide: Small ribosomal subunit protein uS4 (200 aa).

The disordered stretch occupies residues 20–41; the sequence is SGTGKELEKRPYAPGQHGPNQR. The region spanning 92–155 is the S4 RNA-binding domain; the sequence is ARLDAVVYSL…LKLDIIAESV (64 aa).

It belongs to the universal ribosomal protein uS4 family. Part of the 30S ribosomal subunit. Contacts protein S5. The interaction surface between S4 and S5 is involved in control of translational fidelity.

One of the primary rRNA binding proteins, it binds directly to 16S rRNA where it nucleates assembly of the body of the 30S subunit. In terms of biological role, with S5 and S12 plays an important role in translational accuracy. The protein is Small ribosomal subunit protein uS4 of Staphylococcus saprophyticus subsp. saprophyticus (strain ATCC 15305 / DSM 20229 / NCIMB 8711 / NCTC 7292 / S-41).